A 232-amino-acid chain; its full sequence is 2,3,4,5-tetrahydropyridine-2,6-dicarboxylate N-acetyltransferase (232 aa).

The protein belongs to the transferase hexapeptide repeat family. DapH subfamily.

It carries out the reaction (S)-2,3,4,5-tetrahydrodipicolinate + acetyl-CoA + H2O = L-2-acetamido-6-oxoheptanedioate + CoA. Its pathway is amino-acid biosynthesis; L-lysine biosynthesis via DAP pathway; LL-2,6-diaminopimelate from (S)-tetrahydrodipicolinate (acetylase route): step 1/3. Functionally, catalyzes the transfer of an acetyl group from acetyl-CoA to tetrahydrodipicolinate. In Streptococcus pneumoniae serotype 4 (strain ATCC BAA-334 / TIGR4), this protein is 2,3,4,5-tetrahydropyridine-2,6-dicarboxylate N-acetyltransferase.